Here is a 307-residue protein sequence, read N- to C-terminus: GTPase Era (307 aa).

The Era-type G domain maps to 17–186; sequence RCGFVAIVGR…LELIKPYLPE (170 aa). Positions 25–32 are G1; the sequence is GRPNVGKS. 25 to 32 contacts GTP; it reads GRPNVGKS. The segment at 51 to 55 is G2; that stretch reads QTTRN. The interval 72-75 is G3; that stretch reads DTPG. GTP is bound by residues 72-76 and 133-136; these read DTPGF and NKID. The G4 stretch occupies residues 133–136; that stretch reads NKID. The tract at residues 165 to 167 is G5; that stretch reads VSA. Residues 217-293 enclose the KH type-2 domain; that stretch reads LGEELPYAMN…FLKVWVKVKS (77 aa).

The protein belongs to the TRAFAC class TrmE-Era-EngA-EngB-Septin-like GTPase superfamily. Era GTPase family. As to quaternary structure, monomer.

The protein localises to the cytoplasm. The protein resides in the cell inner membrane. In terms of biological role, an essential GTPase that binds both GDP and GTP, with rapid nucleotide exchange. Plays a role in 16S rRNA processing and 30S ribosomal subunit biogenesis and possibly also in cell cycle regulation and energy metabolism. The sequence is that of GTPase Era from Neisseria meningitidis serogroup A / serotype 4A (strain DSM 15465 / Z2491).